The following is a 346-amino-acid chain: Holliday junction branch migration complex subunit RuvB (346 aa).

Residues 1–182 (MSEPARLISP…FGIPVRLTFY (182 aa)) are large ATPase domain (RuvB-L). ATP-binding positions include Leu21, Arg22, Gly63, Lys66, Thr67, Thr68, 129–131 (EDY), Arg172, Tyr182, and Arg219. Position 67 (Thr67) interacts with Mg(2+). The tract at residues 183-253 (TVEELELIVR…IADEALTRLL (71 aa)) is small ATPAse domain (RuvB-S). Positions 256–346 (NVGFDQLDKR…AQFRLFQEDD (91 aa)) are head domain (RuvB-H). Positions 292, 311, and 316 each coordinate DNA.

The protein belongs to the RuvB family. Homohexamer. Forms an RuvA(8)-RuvB(12)-Holliday junction (HJ) complex. HJ DNA is sandwiched between 2 RuvA tetramers; dsDNA enters through RuvA and exits via RuvB. An RuvB hexamer assembles on each DNA strand where it exits the tetramer. Each RuvB hexamer is contacted by two RuvA subunits (via domain III) on 2 adjacent RuvB subunits; this complex drives branch migration. In the full resolvosome a probable DNA-RuvA(4)-RuvB(12)-RuvC(2) complex forms which resolves the HJ.

The protein resides in the cytoplasm. The enzyme catalyses ATP + H2O = ADP + phosphate + H(+). Its function is as follows. The RuvA-RuvB-RuvC complex processes Holliday junction (HJ) DNA during genetic recombination and DNA repair, while the RuvA-RuvB complex plays an important role in the rescue of blocked DNA replication forks via replication fork reversal (RFR). RuvA specifically binds to HJ cruciform DNA, conferring on it an open structure. The RuvB hexamer acts as an ATP-dependent pump, pulling dsDNA into and through the RuvAB complex. RuvB forms 2 homohexamers on either side of HJ DNA bound by 1 or 2 RuvA tetramers; 4 subunits per hexamer contact DNA at a time. Coordinated motions by a converter formed by DNA-disengaged RuvB subunits stimulates ATP hydrolysis and nucleotide exchange. Immobilization of the converter enables RuvB to convert the ATP-contained energy into a lever motion, pulling 2 nucleotides of DNA out of the RuvA tetramer per ATP hydrolyzed, thus driving DNA branch migration. The RuvB motors rotate together with the DNA substrate, which together with the progressing nucleotide cycle form the mechanistic basis for DNA recombination by continuous HJ branch migration. Branch migration allows RuvC to scan DNA until it finds its consensus sequence, where it cleaves and resolves cruciform DNA. The chain is Holliday junction branch migration complex subunit RuvB from Rhizobium etli (strain ATCC 51251 / DSM 11541 / JCM 21823 / NBRC 15573 / CFN 42).